A 497-amino-acid chain; its full sequence is MSNQHIEELNDQQIVRREKMMALAEQGIDPFGKRFDRTANSAELKEKYADKTKEELHELNETAIVAGRLMTKRGKGKVGFAHLQDREGQIQLYVRKDSVGEDNYEIFKKADLGDFIGVEGEVMRTDMGELSIKATKLTHLSKSLRPLPEKFHGLTDIETIYRKRHLDLISNRESFDRFVTRSKMISEIRRYLDGLDFLEVETPVLHNEAGGAAARPFVTHHNAQNIDMVLRIATELHLKRLIVGGMERVYEIGRIFRNEGMDATHNPEFTSIEVYQAYADYLDIMNLTEGIIQHAAKAVKGDGPIDYQGTEIRINEPFKRVHMVDAIKEVTGVDFWPEMTVEEAIALAKEKQVPLEKHFTSVGHIINAFFEEFVEETLVQPTFVFGHPVEVSPLAKKNPEDTRFTDRFELFIMTKEYANAFTELNDPIDQLSRFEAQAQAKELGDDEATGIDYDFVEALEYGMPPTGGLGIGIDRLCMLLTNTTTIRDVLLFPTMKP.

Residues E409 and E416 each contribute to the Mg(2+) site.

The protein belongs to the class-II aminoacyl-tRNA synthetase family. As to quaternary structure, homodimer. Mg(2+) is required as a cofactor.

Its subcellular location is the cytoplasm. The catalysed reaction is tRNA(Lys) + L-lysine + ATP = L-lysyl-tRNA(Lys) + AMP + diphosphate. The chain is Lysine--tRNA ligase from Streptococcus pyogenes serotype M49 (strain NZ131).